The following is a 521-amino-acid chain: Bifunctional purine biosynthesis protein PurH (521 aa).

An MGS-like domain is found at methionine 1–valine 147.

Belongs to the PurH family.

It catalyses the reaction (6R)-10-formyltetrahydrofolate + 5-amino-1-(5-phospho-beta-D-ribosyl)imidazole-4-carboxamide = 5-formamido-1-(5-phospho-D-ribosyl)imidazole-4-carboxamide + (6S)-5,6,7,8-tetrahydrofolate. The catalysed reaction is IMP + H2O = 5-formamido-1-(5-phospho-D-ribosyl)imidazole-4-carboxamide. It participates in purine metabolism; IMP biosynthesis via de novo pathway; 5-formamido-1-(5-phospho-D-ribosyl)imidazole-4-carboxamide from 5-amino-1-(5-phospho-D-ribosyl)imidazole-4-carboxamide (10-formyl THF route): step 1/1. The protein operates within purine metabolism; IMP biosynthesis via de novo pathway; IMP from 5-formamido-1-(5-phospho-D-ribosyl)imidazole-4-carboxamide: step 1/1. The polypeptide is Bifunctional purine biosynthesis protein PurH (Geobacter metallireducens (strain ATCC 53774 / DSM 7210 / GS-15)).